A 266-amino-acid polypeptide reads, in one-letter code: Imidazole glycerol phosphate synthase subunit HisF (266 aa).

Catalysis depends on residues D11 and D130.

It belongs to the HisA/HisF family. As to quaternary structure, heterodimer of HisH and HisF.

It localises to the cytoplasm. It carries out the reaction 5-[(5-phospho-1-deoxy-D-ribulos-1-ylimino)methylamino]-1-(5-phospho-beta-D-ribosyl)imidazole-4-carboxamide + L-glutamine = D-erythro-1-(imidazol-4-yl)glycerol 3-phosphate + 5-amino-1-(5-phospho-beta-D-ribosyl)imidazole-4-carboxamide + L-glutamate + H(+). Its pathway is amino-acid biosynthesis; L-histidine biosynthesis; L-histidine from 5-phospho-alpha-D-ribose 1-diphosphate: step 5/9. Functionally, IGPS catalyzes the conversion of PRFAR and glutamine to IGP, AICAR and glutamate. The HisF subunit catalyzes the cyclization activity that produces IGP and AICAR from PRFAR using the ammonia provided by the HisH subunit. The sequence is that of Imidazole glycerol phosphate synthase subunit HisF from Albidiferax ferrireducens (strain ATCC BAA-621 / DSM 15236 / T118) (Rhodoferax ferrireducens).